We begin with the raw amino-acid sequence, 223 residues long: Phage shock protein A homolog (223 aa).

The stretch at 29–185 (IDQALRDMRS…AGMEDRNKAM (157 aa)) forms a coiled coil.

The protein belongs to the PspA/Vipp/IM30 family.

The chain is Phage shock protein A homolog from Deinococcus radiodurans (strain ATCC 13939 / DSM 20539 / JCM 16871 / CCUG 27074 / LMG 4051 / NBRC 15346 / NCIMB 9279 / VKM B-1422 / R1).